Consider the following 260-residue polypeptide: Thiazole synthase (260 aa).

Lysine 96 serves as the catalytic Schiff-base intermediate with DXP. 1-deoxy-D-xylulose 5-phosphate-binding positions include glycine 157, 184-185 (AG), and 206-207 (NT).

This sequence belongs to the ThiG family. In terms of assembly, homotetramer. Forms heterodimers with either ThiH or ThiS.

The protein localises to the cytoplasm. It catalyses the reaction [ThiS sulfur-carrier protein]-C-terminal-Gly-aminoethanethioate + 2-iminoacetate + 1-deoxy-D-xylulose 5-phosphate = [ThiS sulfur-carrier protein]-C-terminal Gly-Gly + 2-[(2R,5Z)-2-carboxy-4-methylthiazol-5(2H)-ylidene]ethyl phosphate + 2 H2O + H(+). The protein operates within cofactor biosynthesis; thiamine diphosphate biosynthesis. Catalyzes the rearrangement of 1-deoxy-D-xylulose 5-phosphate (DXP) to produce the thiazole phosphate moiety of thiamine. Sulfur is provided by the thiocarboxylate moiety of the carrier protein ThiS. In vitro, sulfur can be provided by H(2)S. The sequence is that of Thiazole synthase from Bradyrhizobium diazoefficiens (strain JCM 10833 / BCRC 13528 / IAM 13628 / NBRC 14792 / USDA 110).